We begin with the raw amino-acid sequence, 454 residues long: Bifunctional protein GlmU (454 aa).

The segment at 1 to 228 (MTLPLHVVIL…PQHVEGANDP (228 aa)) is pyrophosphorylase. Residues 10–13 (LAAG), K24, Q76, 81–82 (GT), 103–105 (YGD), G138, E153, N168, and N226 each bind UDP-N-acetyl-alpha-D-glucosamine. D105 serves as a coordination point for Mg(2+). N226 provides a ligand contact to Mg(2+). The interval 229-249 (WQLAQLERAWQLRAARTLCLQ) is linker. Residues 250 to 454 (GVRMADPARV…IEGWKRPTKK (205 aa)) are N-acetyltransferase. R332 and K350 together coordinate UDP-N-acetyl-alpha-D-glucosamine. H362 acts as the Proton acceptor in catalysis. 2 residues coordinate UDP-N-acetyl-alpha-D-glucosamine: Y365 and N376. Residues A379, 385 to 386 (NY), S404, A422, and R439 contribute to the acetyl-CoA site.

This sequence in the N-terminal section; belongs to the N-acetylglucosamine-1-phosphate uridyltransferase family. It in the C-terminal section; belongs to the transferase hexapeptide repeat family. Homotrimer. Mg(2+) is required as a cofactor.

It is found in the cytoplasm. It carries out the reaction alpha-D-glucosamine 1-phosphate + acetyl-CoA = N-acetyl-alpha-D-glucosamine 1-phosphate + CoA + H(+). It catalyses the reaction N-acetyl-alpha-D-glucosamine 1-phosphate + UTP + H(+) = UDP-N-acetyl-alpha-D-glucosamine + diphosphate. The protein operates within nucleotide-sugar biosynthesis; UDP-N-acetyl-alpha-D-glucosamine biosynthesis; N-acetyl-alpha-D-glucosamine 1-phosphate from alpha-D-glucosamine 6-phosphate (route II): step 2/2. It functions in the pathway nucleotide-sugar biosynthesis; UDP-N-acetyl-alpha-D-glucosamine biosynthesis; UDP-N-acetyl-alpha-D-glucosamine from N-acetyl-alpha-D-glucosamine 1-phosphate: step 1/1. It participates in bacterial outer membrane biogenesis; LPS lipid A biosynthesis. Functionally, catalyzes the last two sequential reactions in the de novo biosynthetic pathway for UDP-N-acetylglucosamine (UDP-GlcNAc). The C-terminal domain catalyzes the transfer of acetyl group from acetyl coenzyme A to glucosamine-1-phosphate (GlcN-1-P) to produce N-acetylglucosamine-1-phosphate (GlcNAc-1-P), which is converted into UDP-GlcNAc by the transfer of uridine 5-monophosphate (from uridine 5-triphosphate), a reaction catalyzed by the N-terminal domain. This is Bifunctional protein GlmU from Xanthomonas euvesicatoria pv. vesicatoria (strain 85-10) (Xanthomonas campestris pv. vesicatoria).